Reading from the N-terminus, the 22-residue chain is Mu-conotoxin GIIIB (22 aa).

3 disulfide bridges follow: Cys3/Cys15, Cys4/Cys20, and Cys10/Cys21. A 4-hydroxyproline; partial mark is found at Pro6 and Pro7. 4-hydroxyproline is present on Pro17. Ala22 is modified (alanine amide).

This sequence belongs to the conotoxin M superfamily. In terms of tissue distribution, expressed by the venom duct.

Its subcellular location is the secreted. Mu-conotoxins block voltage-gated sodium channels (Nav). The polypeptide is Mu-conotoxin GIIIB (Conus geographus (Geography cone)).